Reading from the N-terminus, the 393-residue chain is Ornithine decarboxylase 2 (393 aa).

At K62 the chain carries N6-(pyridoxal phosphate)lysine. Residues S194, G231, and 265 to 268 (EPGR) contribute to the pyridoxal 5'-phosphate site. 314-315 (YY) provides a ligand contact to substrate. The active-site Proton donor; shared with dimeric partner is the C343. Position 344 (D344) interacts with substrate. Y371 provides a ligand contact to pyridoxal 5'-phosphate.

Belongs to the Orn/Lys/Arg decarboxylase class-II family. In terms of assembly, homodimer. Only the dimer is catalytically active, as the active sites are constructed of residues from both monomers. The cofactor is pyridoxal 5'-phosphate.

It catalyses the reaction L-ornithine + H(+) = putrescine + CO2. It functions in the pathway amine and polyamine biosynthesis; putrescine biosynthesis via L-ornithine pathway; putrescine from L-ornithine: step 1/1. Inhibited by antizyme (AZ) in response to polyamine levels. AZ inhibits the assembly of the functional homodimer by binding to ODC monomers and targeting them for ubiquitin-independent proteolytic destruction by the 26S proteasome. Catalyzes the first and rate-limiting step of polyamine biosynthesis that converts ornithine into putrescine, which is the precursor for the polyamines, spermidine and spermine. Polyamines are essential for cell proliferation and are implicated in cellular processes, ranging from DNA replication to apoptosis. This chain is Ornithine decarboxylase 2 (Odc2), found in Drosophila melanogaster (Fruit fly).